The primary structure comprises 480 residues: uncharacterized protein (480 aa).

Position 222 is an N6-(pyridoxal phosphate)lysine (Lys-222).

The protein belongs to the Orn/Lys/Arg decarboxylase class-I family. Pyridoxal 5'-phosphate is required as a cofactor.

This is an uncharacterized protein from Bacillus subtilis (strain 168).